The primary structure comprises 204 residues: MGAYTYVSELWRKKQSDVMRFLQRVRCWEYRQLPSIVRVTRPTRPDKARRLGYKAKQGYVVYRVRVKRGGRKRPVPKGIVYGKPTNQGVTQLKFQRTKRSVAEERAGRKLGGLRVLNSYWINEDSTYKYFEVILVDQAHAAIRNDPRINWICNPVHKHRELRGLTSAGKKYRGLRGRGHLHNKAPPSRRANWKRNQTLSLPRYR.

Residues 172–182 (RGLRGRGHLHN) show a composition bias toward basic residues. The interval 172 to 204 (RGLRGRGHLHNKAPPSRRANWKRNQTLSLPRYR) is disordered. Polar residues predominate over residues 193 to 204 (KRNQTLSLPRYR).

It belongs to the eukaryotic ribosomal protein eL15 family.

This chain is Large ribosomal subunit protein eL15 (RPL15), found in Petunia hybrida (Petunia).